The chain runs to 300 residues: tRNA dimethylallyltransferase 1 (300 aa).

10-17 (GPTGVGKT) contributes to the ATP binding site. 12-17 (TGVGKT) is a binding site for substrate. The interval 35–38 (DSRQ) is interaction with substrate tRNA.

Belongs to the IPP transferase family. In terms of assembly, monomer. Requires Mg(2+) as cofactor.

It catalyses the reaction adenosine(37) in tRNA + dimethylallyl diphosphate = N(6)-dimethylallyladenosine(37) in tRNA + diphosphate. Catalyzes the transfer of a dimethylallyl group onto the adenine at position 37 in tRNAs that read codons beginning with uridine, leading to the formation of N6-(dimethylallyl)adenosine (i(6)A). This chain is tRNA dimethylallyltransferase 1, found in Phocaeicola vulgatus (strain ATCC 8482 / DSM 1447 / JCM 5826 / CCUG 4940 / NBRC 14291 / NCTC 11154) (Bacteroides vulgatus).